The chain runs to 166 residues: Small ribosomal subunit protein uS5 (166 aa).

The 64-residue stretch at 11 to 74 (LQEKLIAVNR…EKARRNMINV (64 aa)) folds into the S5 DRBM domain.

It belongs to the universal ribosomal protein uS5 family. As to quaternary structure, part of the 30S ribosomal subunit. Contacts proteins S4 and S8.

With S4 and S12 plays an important role in translational accuracy. Its function is as follows. Located at the back of the 30S subunit body where it stabilizes the conformation of the head with respect to the body. In Actinobacillus pleuropneumoniae serotype 5b (strain L20), this protein is Small ribosomal subunit protein uS5.